The primary structure comprises 122 residues: Large ribosomal subunit protein uL18 (122 aa).

Residues 1–19 are compositionally biased toward basic residues; the sequence is MTKLSRKLQTQKRHRRLRR. The tract at residues 1-21 is disordered; the sequence is MTKLSRKLQTQKRHRRLRRSV.

It belongs to the universal ribosomal protein uL18 family. Part of the 50S ribosomal subunit; part of the 5S rRNA/L5/L18/L25 subcomplex. Contacts the 5S and 23S rRNAs.

In terms of biological role, this is one of the proteins that bind and probably mediate the attachment of the 5S RNA into the large ribosomal subunit, where it forms part of the central protuberance. This chain is Large ribosomal subunit protein uL18, found in Prochlorococcus marinus (strain MIT 9312).